Consider the following 575-residue polypeptide: Physarolisin (575 aa).

Residues M1–A18 form the signal peptide. The propeptide at V19–G173 is removed in mature form. A Peptidase S53 domain is found at Y179–L574. The N-linked (GlcNAc...) asparagine glycan is linked to N200. Active-site charge relay system residues include E248 and D252. Residues N262, N307, N380, and N453 are each glycosylated (N-linked (GlcNAc...) asparagine). S484 serves as the catalytic Charge relay system. Ca(2+) is bound by residues D529, I530, G552, and D554.

Ca(2+) is required as a cofactor. Autocatalytically processed. Post-translationally, N-glycosylated.

The enzyme catalyses Milk clotting activity. Preferential cleavage of 8-Gly-|-Ser-9 in B chain of insulin most rapidly, followed by 11-Leu-|-Val-12, 19-Cys(SO(3)H)-|-Gly and 24-Phe-|-Phe-25. No action on Ac-Phe-Tyr(I)2.. Its activity is regulated as follows. Inhibited by diisopropylfluorophosphate (DFP) and diazoacetyl-D,L-norleucine methyl ester (DAN). This chain is Physarolisin, found in Physarum polycephalum (Slime mold).